A 521-amino-acid chain; its full sequence is U4/U6 small nuclear ribonucleoprotein Prp4 (521 aa).

Lys-26 carries the post-translational modification N6-acetyllysine. 7 WD repeats span residues 228-267 (GDDR…LLHT), 270-317 (GHNT…PVAD), 320-359 (GHTV…EILH), 362-401 (GHSM…CIMF), 404-443 (GHLK…CVYT), 446-486 (AHQN…PLKT), and 489-521 (GHEG…WMAE).

Component of the precatalytic spliceosome (spliceosome B complex). Component of the U4/U6-U5 tri-snRNP complex, a building block of the precatalytic spliceosome (spliceosome B complex). The U4/U6-U5 tri-snRNP complex is composed of the U4, U6 and U5 snRNAs and at least PRPF3, PRPF4, PRPF6, PRPF8, PRPF31, SNRNP200, TXNL4A, SNRNP40, SNRPB, SNRPD1, SNRPD2, SNRPD3, SNRPE, SNRPF, SNRPG, DDX23, CD2BP2, PPIH, SNU13, EFTUD2, SART1 and USP39, plus LSM2, LSM3, LSM4, LSM5, LSM6, LSM7 and LSM8. Interacts directly with PRPF18, PPIH and PRPF3. Part of a heteromeric complex containing PPIH, PRPF3 and PRPF4 that is stable in the absence of RNA. Interacts with ERCC6.

It localises to the nucleus. The protein resides in the nucleus speckle. Functionally, plays a role in pre-mRNA splicing as component of the U4/U6-U5 tri-snRNP complex that is involved in spliceosome assembly, and as component of the precatalytic spliceosome (spliceosome B complex). This is U4/U6 small nuclear ribonucleoprotein Prp4 (Prpf4) from Mus musculus (Mouse).